The following is a 535-amino-acid chain: Glutamate--cysteine ligase (535 aa).

Belongs to the glutamate--cysteine ligase type 1 family. Type 1 subfamily.

It carries out the reaction L-cysteine + L-glutamate + ATP = gamma-L-glutamyl-L-cysteine + ADP + phosphate + H(+). Its pathway is sulfur metabolism; glutathione biosynthesis; glutathione from L-cysteine and L-glutamate: step 1/2. The protein is Glutamate--cysteine ligase of Pseudomonas syringae pv. syringae (strain B728a).